Consider the following 363-residue polypeptide: Pyrimidine monooxygenase RutA (363 aa).

FMN contacts are provided by residues Ile-49–Lys-50, Asn-115, Glu-124, Arg-140–Tyr-141, and Ser-190.

It belongs to the NtaA/SnaA/DszA monooxygenase family. RutA subfamily.

The catalysed reaction is uracil + FMNH2 + NADH + O2 = (Z)-3-ureidoacrylate + FMN + NAD(+) + H2O + H(+). It carries out the reaction thymine + FMNH2 + NADH + O2 = (Z)-2-methylureidoacrylate + FMN + NAD(+) + H2O + H(+). Its function is as follows. Catalyzes the pyrimidine ring opening between N-3 and C-4 by an unusual flavin hydroperoxide-catalyzed mechanism, adding oxygen atoms in the process to yield ureidoacrylate peracid, that immediately reacts with FMN forming ureidoacrylate and FMN-N(5)-oxide. The FMN-N(5)-oxide reacts spontaneously with NADH to produce FMN. Requires the flavin reductase RutF to regenerate FMN in vivo. The polypeptide is Pyrimidine monooxygenase RutA (Klebsiella variicola (strain At-22)).